Here is an 89-residue protein sequence, read N- to C-terminus: Small ribosomal subunit protein uS14A (89 aa).

It belongs to the universal ribosomal protein uS14 family. Part of the 30S ribosomal subunit. Contacts proteins S3 and S10.

Its function is as follows. Binds 16S rRNA, required for the assembly of 30S particles and may also be responsible for determining the conformation of the 16S rRNA at the A site. The protein is Small ribosomal subunit protein uS14A of Listeria monocytogenes serovar 1/2a (strain ATCC BAA-679 / EGD-e).